Here is a 156-residue protein sequence, read N- to C-terminus: Small ribosomal subunit protein uS7 (156 aa).

Belongs to the universal ribosomal protein uS7 family. In terms of assembly, part of the 30S ribosomal subunit. Contacts proteins S9 and S11.

In terms of biological role, one of the primary rRNA binding proteins, it binds directly to 16S rRNA where it nucleates assembly of the head domain of the 30S subunit. Is located at the subunit interface close to the decoding center, probably blocks exit of the E-site tRNA. This chain is Small ribosomal subunit protein uS7, found in Chromohalobacter salexigens (strain ATCC BAA-138 / DSM 3043 / CIP 106854 / NCIMB 13768 / 1H11).